A 127-amino-acid polypeptide reads, in one-letter code: Large ribosomal subunit protein bL12 (127 aa).

It belongs to the bacterial ribosomal protein bL12 family. In terms of assembly, homodimer. Part of the ribosomal stalk of the 50S ribosomal subunit. Forms a multimeric L10(L12)X complex, where L10 forms an elongated spine to which 2 to 4 L12 dimers bind in a sequential fashion. Binds GTP-bound translation factors.

Functionally, forms part of the ribosomal stalk which helps the ribosome interact with GTP-bound translation factors. Is thus essential for accurate translation. The protein is Large ribosomal subunit protein bL12 of Acidiphilium cryptum (strain JF-5).